The primary structure comprises 329 residues: Malate dehydrogenase (329 aa).

12-18 contributes to the NAD(+) binding site; that stretch reads GAAGQIG. 2 residues coordinate substrate: arginine 93 and arginine 99. NAD(+) contacts are provided by residues asparagine 106, glutamine 113, and 130–132; that span reads VGN. Substrate contacts are provided by asparagine 132 and arginine 166. Histidine 191 serves as the catalytic Proton acceptor.

It belongs to the LDH/MDH superfamily. MDH type 2 family.

The catalysed reaction is (S)-malate + NAD(+) = oxaloacetate + NADH + H(+). Its function is as follows. Catalyzes the reversible oxidation of malate to oxaloacetate. This is Malate dehydrogenase from Aromatoleum aromaticum (strain DSM 19018 / LMG 30748 / EbN1) (Azoarcus sp. (strain EbN1)).